A 208-amino-acid polypeptide reads, in one-letter code: Putative dioxygenase RBE_0329 (208 aa).

Belongs to the intradiol ring-cleavage dioxygenase family.

This is Putative dioxygenase RBE_0329 from Rickettsia bellii (strain RML369-C).